The following is a 243-amino-acid chain: MSEKKGALKVIPSASEEQLVQALGDLLQRCSQEALAKHDKFSVGLSGGSLVQLLTKALKSCNLKTAKWVFFFCDERYVRLDDSDSTYGAYRAEWLTQLPCIQESQFVRADTSQPLDACAADYEAKVKSQVDRFDLLLLGMGPDGHTCSLFPEQPATLQETKRLVIPIRNSPKPPPERITFTLPLINKARNVAFVVTGAAKASVVKSVFVDLDKKFPAAWVNPTKGQLTLIVDAGAGKEIETLK.

The protein belongs to the glucosamine/galactosamine-6-phosphate isomerase family. 6-phosphogluconolactonase subfamily.

It carries out the reaction 6-phospho-D-glucono-1,5-lactone + H2O = 6-phospho-D-gluconate + H(+). The protein operates within carbohydrate degradation; pentose phosphate pathway; D-ribulose 5-phosphate from D-glucose 6-phosphate (oxidative stage): step 2/3. In terms of biological role, hydrolysis of 6-phosphogluconolactone to 6-phosphogluconate. The protein is Probable 6-phosphogluconolactonase of Drosophila melanogaster (Fruit fly).